The chain runs to 168 residues: Photosystem I assembly protein Ycf3 (168 aa).

TPR repeat units lie at residues 35 to 68, 72 to 105, and 120 to 153; these read AFTY…EIDP, SYIL…NPFL, and GEQA…TPGN.

It belongs to the Ycf3 family.

It is found in the plastid. The protein resides in the chloroplast thylakoid membrane. Functionally, essential for the assembly of the photosystem I (PSI) complex. May act as a chaperone-like factor to guide the assembly of the PSI subunits. The chain is Photosystem I assembly protein Ycf3 from Populus alba (White poplar).